We begin with the raw amino-acid sequence, 158 residues long: MAAAGAGPGPGPGAPPGLEAALQKLALRRKKVLSAEEMELFELAQAAGGAMDPDVFKILVDLLKLNVAPLAVFQMLKSMCAGQRVASDSQDPTAAPLPTPSVPETRGRNKGGGALGGGPALAERGGRDGPGQRMPRQPSASRLPKGGGPGRSPPRSGT.

Ser-34 bears the Phosphoserine mark. The disordered stretch occupies residues 81–158 (AGQRVASDSQ…PGRSPPRSGT (78 aa)). Gly residues predominate over residues 110–119 (KGGGALGGGP). Ser-152 is modified (phosphoserine).

It belongs to the MOZART2 family. In terms of assembly, associates with the gamma-tubulin ring complex (gTuRC) consisting of TUBGCP2, TUBGCP3, TUBGCP4, TUBGCP5 and TUBGCP6 and gamma-tubulin TUBG1 or TUBG2; within the complex, interacts with TUBGCP2; the interaction plays a role in gTuRC activation.

It localises to the cytoplasm. The protein localises to the cytoskeleton. Its subcellular location is the microtubule organizing center. It is found in the centrosome. The protein resides in the spindle. Its function is as follows. Required for the recruitment and the assembly of the gamma-tubulin ring complex (gTuRC) at the centrosome. The gTuRC regulates the minus-end nucleation of alpha-beta tubulin heterodimers that grow into microtubule protafilaments, a critical step in centrosome duplication and spindle formation. The sequence is that of Mitotic-spindle organizing protein 2 (MZT2) from Bos taurus (Bovine).